Here is a 424-residue protein sequence, read N- to C-terminus: Enolase (424 aa).

Gln162 contacts (2R)-2-phosphoglycerate. The active-site Proton donor is the Glu204. Residues Asp241, Glu284, and Asp311 each contribute to the Mg(2+) site. (2R)-2-phosphoglycerate-binding residues include Lys336, Arg365, Ser366, and Lys387. Lys336 acts as the Proton acceptor in catalysis.

This sequence belongs to the enolase family. Mg(2+) is required as a cofactor.

Its subcellular location is the cytoplasm. The protein resides in the secreted. The protein localises to the cell surface. The enzyme catalyses (2R)-2-phosphoglycerate = phosphoenolpyruvate + H2O. It functions in the pathway carbohydrate degradation; glycolysis; pyruvate from D-glyceraldehyde 3-phosphate: step 4/5. In terms of biological role, catalyzes the reversible conversion of 2-phosphoglycerate (2-PG) into phosphoenolpyruvate (PEP). It is essential for the degradation of carbohydrates via glycolysis. The sequence is that of Enolase from Rhizobium johnstonii (strain DSM 114642 / LMG 32736 / 3841) (Rhizobium leguminosarum bv. viciae).